Here is a 103-residue protein sequence, read N- to C-terminus: U6 snRNA-associated Sm-like protein LSm7 (103 aa).

At A2 the chain carries N-acetylalanine. The 81-residue stretch at 10-90 folds into the Sm domain; sequence ESILDLSKYI…VVLICPQDGM (81 aa).

Belongs to the snRNP Sm proteins family. In terms of assembly, component of the precatalytic spliceosome (spliceosome B complex). Component of the U4/U6-U5 tri-snRNP complex, a building block of the precatalytic spliceosome (spliceosome B complex). The U4/U6-U5 tri-snRNP complex is composed of the U4, U6 and U5 snRNAs and at least PRPF3, PRPF4, PRPF6, PRPF8, PRPF31, SNRNP200, TXNL4A, SNRNP40, SNRPB, SNRPD1, SNRPD2, SNRPD3, SNRPE, SNRPF, SNRPG, DDX23, CD2BP2, PPIH, SNU13, EFTUD2, SART1 and USP39, plus LSM2, LSM3, LSM4, LSM5, LSM6, LSM7 and LSM8. LSM2, LSM3, LSM4, LSM5, LSM6, LSM7 and LSM8 form a heptameric, ring-shaped subcomplex (the LSM2-8 complex) that is part of the U4/U6-U5 tri-snRNP complex and the precatalytic spliceosome. Interacts with TACC1.

It localises to the nucleus. Functionally, plays a role in pre-mRNA splicing as component of the U4/U6-U5 tri-snRNP complex that is involved in spliceosome assembly, and as component of the precatalytic spliceosome (spliceosome B complex). The heptameric LSM2-8 complex binds specifically to the 3'-terminal U-tract of U6 snRNA. In Mus musculus (Mouse), this protein is U6 snRNA-associated Sm-like protein LSm7 (Lsm7).